A 340-amino-acid polypeptide reads, in one-letter code: Sulfotransferase 2B1 (340 aa).

Residue 67–72 (KSGTNW) participates in 3'-phosphoadenylyl sulfate binding. W95 and W100 together coordinate substrate. The active-site Proton acceptor is the H122. 3'-phosphoadenylyl sulfate is bound by residues R144, S152, Y207, 241–246 (SAFAAM), and 271–273 (RKG). Residues 301 to 340 (LPSFPWDRSAEDGSPDGETEPSPSPSPGLASDDPNPGSSQ) are disordered.

It belongs to the sulfotransferase 1 family. As to expression, isoform 1 is expressed in skin and testis. Higher level of isoform 2 expressed in skin and intestine, moderate level in the kidney, low level in liver, stomach and placenta.

The protein localises to the cytoplasm. It localises to the cytosol. Its subcellular location is the microsome. It is found in the nucleus. It carries out the reaction an alcohol + 3'-phosphoadenylyl sulfate = an alkyl sulfate + adenosine 3',5'-bisphosphate + H(+). The catalysed reaction is pregnenolone + 3'-phosphoadenylyl sulfate = pregnenolone sulfate + adenosine 3',5'-bisphosphate + H(+). It catalyses the reaction 3beta-hydroxyandrost-5-en-17-one + 3'-phosphoadenylyl sulfate = dehydroepiandrosterone 3-sulfate + adenosine 3',5'-bisphosphate + H(+). The enzyme catalyses cholesterol + 3'-phosphoadenylyl sulfate = cholesterol sulfate + adenosine 3',5'-bisphosphate + H(+). In terms of biological role, sulfotransferase that utilizes 3'-phospho-5'-adenylyl sulfate (PAPS) as sulfonate donor to catalyze the sulfate conjugation. Sulfonation increases the water solubility of most compounds, and therefore their renal excretion, but it can also result in bioactivation to form active metabolites. Sulfonates cholesterol. Catalyzes sulfation of the 3beta-hydroxyl groups of steroids, such as, pregnenolone and dehydroepiandrosterone (DHEA). Conjugates efficiently cholesterol but has a greater affinity for pregnenolone sulfation. Does not show high activity with DHEA. Plays a role in epidermal cholesterol metabolism and in the regulation of epidermal proliferation and differentiation. Prefers pregnenolone over DHEA as a substrate and does not sulfate cholesterol. This is Sulfotransferase 2B1 from Rattus norvegicus (Rat).